A 148-amino-acid chain; its full sequence is Snaclec B1 (148 aa).

The first 24 residues, Met1 to Ala24, serve as a signal peptide directing secretion. 3 disulfides stabilise this stretch: Cys27/Cys38, Cys55/Cys144, and Cys121/Cys136. The 112-residue stretch at Tyr34 to Lys145 folds into the C-type lectin domain.

Belongs to the snaclec family. Heterodimer; disulfide-linked. Expressed by the venom gland.

Its subcellular location is the secreted. Interferes with one step of hemostasis (modulation of platelet aggregation, or coagulation cascade, for example). This Macrovipera lebetinus (Levantine viper) protein is Snaclec B1.